The following is a 130-amino-acid chain: Glutamate-rich protein 4 (130 aa).

Acidic residues predominate over residues 91 to 104; sequence EEEEESSKEEEEDQ. The tract at residues 91-130 is disordered; the sequence is EEEEESSKEEEEDQEPQRKQEEEHLEACPAPHPPDFEMMI. Residues 105 to 116 are compositionally biased toward basic and acidic residues; it reads EPQRKQEEEHLE.

The protein is Glutamate-rich protein 4 (ERICH4) of Homo sapiens (Human).